The sequence spans 385 residues: Proliferation-associated protein A (385 aa).

It belongs to the peptidase M24 family.

In Dictyostelium discoideum (Social amoeba), this protein is Proliferation-associated protein A (prlA).